The chain runs to 306 residues: Putative NylC-analogous protein (306 aa).

It belongs to the peptidase S58 family.

This Agromyces sp. (strain KY5R) protein is Putative NylC-analogous protein.